A 276-amino-acid polypeptide reads, in one-letter code: Large ribosomal subunit protein uL2 (276 aa).

Residues 221–276 (RGSAMNPNDHPHGGGEGRAPIGRKSPMTPWGKKARGVKTRDRKKASNALIIRRRTK) form a disordered region. Residues 252–276 (KKARGVKTRDRKKASNALIIRRRTK) are compositionally biased toward basic residues.

It belongs to the universal ribosomal protein uL2 family. As to quaternary structure, part of the 50S ribosomal subunit. Forms a bridge to the 30S subunit in the 70S ribosome.

Functionally, one of the primary rRNA binding proteins. Required for association of the 30S and 50S subunits to form the 70S ribosome, for tRNA binding and peptide bond formation. It has been suggested to have peptidyltransferase activity; this is somewhat controversial. Makes several contacts with the 16S rRNA in the 70S ribosome. In Onion yellows phytoplasma (strain OY-M), this protein is Large ribosomal subunit protein uL2.